Reading from the N-terminus, the 681-residue chain is MDGKYVLCNWKDQLWPAKVLDRSESPSESKRKNTSSLEVEILSLDEKITVESTDTKVLSKSAVEAIMSSLAVQSEVIIAPREETAYERSLKMALEMVKEGTNLSQESMSEEQPTATASENVPEQPPDSPPHKKFRKLESNTQEDSASILLCSESDDSMTDDKLQVHTTGESMPSEMDTKATENLGCCQTDPSLADEDDKKEEKKKIDISAIMSVNLSLKEESEYIKEEKFVPSSEDLTVPKEESQDILPEAPLAVSSECSIVSENNMEDPGEGPSNQNLVSYANQNQSSVESDVGAETSTAGCSGDFQVSLPTRDTVSSDLLLQRLDLEDLEEEARASGKLLSLNPASAAALENDNEDDDEDLPRFILHYETRAFETGMIVWFKYQKYPFWPAVIKSIRRKERKASVLLVEADMSPQKKGVRVSLRRLKKYDCKEKQALVEKAREEYRESIDWCVSLICDYRVRLGCGSFTGSFFEYYAADISYPVRKIIKQDTFRNIFPKLYNENVGEQLPMASQAKRVSFQKILPDRMKPARDRANKNLVDFIVNAKGTEDHLLGILKGTKKSKWLKSFLNAKSFTPCIETYFEDEDQLDEVVKYLQEIYKQIDQKMLTLIKDDKIKFVLEVLLPEAIICSISAVDGLDYEAAEAKYLKGPSLGCRERELYDSKILFEKRRRSLPNEGH.

Positions 102–121 are enriched in polar residues; the sequence is NLSQESMSEEQPTATASENV. Disordered stretches follow at residues 102–144, 166–200, and 285–304; these read NLSQ…TQED, HTTG…DDKK, and QNQS…AGCS. The residue at position 128 (Ser-128) is a Phosphoserine. Polar residues predominate over residues 285–302; the sequence is QNQSSVESDVGAETSTAG. The PWWP domain maps to 377 to 438; it reads TGMIVWFKYQ…KKYDCKEKQA (62 aa).

It belongs to the PWWP3A family.

This is PWWP domain-containing DNA repair factor 3B (Pwwp3b) from Mus musculus (Mouse).